A 141-amino-acid chain; its full sequence is Large ribosomal subunit protein uL16 (141 aa).

This sequence belongs to the universal ribosomal protein uL16 family. In terms of assembly, part of the 50S ribosomal subunit.

Binds 23S rRNA and is also seen to make contacts with the A and possibly P site tRNAs. The polypeptide is Large ribosomal subunit protein uL16 (Campylobacter lari (strain RM2100 / D67 / ATCC BAA-1060)).